We begin with the raw amino-acid sequence, 35 residues long: Photosystem II reaction center protein M (35 aa).

A helical transmembrane segment spans residues 7-27 (GFIATILFVLVPTVFLLILYI).

The protein belongs to the PsbM family. As to quaternary structure, PSII is composed of 1 copy each of membrane proteins PsbA, PsbB, PsbC, PsbD, PsbE, PsbF, PsbH, PsbI, PsbJ, PsbK, PsbL, PsbM, PsbT, PsbX, PsbY, PsbZ, Psb30/Ycf12, peripheral proteins PsbO, CyanoQ (PsbQ), PsbU, PsbV and a large number of cofactors. It forms dimeric complexes.

Its subcellular location is the cellular thylakoid membrane. Its function is as follows. One of the components of the core complex of photosystem II (PSII). PSII is a light-driven water:plastoquinone oxidoreductase that uses light energy to abstract electrons from H(2)O, generating O(2) and a proton gradient subsequently used for ATP formation. It consists of a core antenna complex that captures photons, and an electron transfer chain that converts photonic excitation into a charge separation. This subunit is found at the monomer-monomer interface. The protein is Photosystem II reaction center protein M of Gloeothece citriformis (strain PCC 7424) (Cyanothece sp. (strain PCC 7424)).